The sequence spans 339 residues: Protein RETICULATA-RELATED 2, chloroplastic (339 aa).

The N-terminal 58 residues, 1-58 (MAAMAAKLHISTKSDQSNVRLPRLINLSRDPTARVLFPRNGSVSSLHTNFSSPNIMVP), are a transit peptide targeting the chloroplast. Residues 68-86 (IGNHGGGSGSGGGGGGYGG) show a composition bias toward gly residues. The interval 68–92 (IGNHGGGSGSGGGGGGYGGSEEEES) is disordered. 2 helical membrane passes run 148–168 (FVFSTLVVGSILNFTLMYLLA) and 213–233 (VFATVGLAAGLVGTAISNGLI).

Belongs to the RETICULATA family.

The protein resides in the plastid. Its subcellular location is the chloroplast membrane. May play a role in leaf development. This Arabidopsis thaliana (Mouse-ear cress) protein is Protein RETICULATA-RELATED 2, chloroplastic.